The primary structure comprises 334 residues: Glyceraldehyde-3-phosphate dehydrogenase (334 aa).

NAD(+) contacts are provided by residues 12 to 13 (RI), D34, and R79. Residues 150–152 (SCT), T181, 210–211 (TG), and R233 contribute to the D-glyceraldehyde 3-phosphate site. The active-site Nucleophile is C151. Position 315 (N315) interacts with NAD(+).

Belongs to the glyceraldehyde-3-phosphate dehydrogenase family. In terms of assembly, homotetramer.

Its subcellular location is the cytoplasm. The catalysed reaction is D-glyceraldehyde 3-phosphate + phosphate + NAD(+) = (2R)-3-phospho-glyceroyl phosphate + NADH + H(+). It participates in carbohydrate degradation; glycolysis; pyruvate from D-glyceraldehyde 3-phosphate: step 1/5. The polypeptide is Glyceraldehyde-3-phosphate dehydrogenase (GPD) (Wickerhamomyces ciferrii (strain ATCC 14091 / BCRC 22168 / CBS 111 / JCM 3599 / NBRC 0793 / NRRL Y-1031 F-60-10) (Yeast)).